An 85-amino-acid polypeptide reads, in one-letter code: Small ribosomal subunit protein uS17 (85 aa).

Belongs to the universal ribosomal protein uS17 family. In terms of assembly, part of the 30S ribosomal subunit.

In terms of biological role, one of the primary rRNA binding proteins, it binds specifically to the 5'-end of 16S ribosomal RNA. This is Small ribosomal subunit protein uS17 from Mesoplasma florum (strain ATCC 33453 / NBRC 100688 / NCTC 11704 / L1) (Acholeplasma florum).